We begin with the raw amino-acid sequence, 804 residues long: Putative mRNA-capping enzyme P5 (804 aa).

The protein belongs to the phytoreovirus protein P5 family.

The protein resides in the virion. It localises to the host cytoplasm. It catalyses the reaction a 5'-end diphospho-ribonucleoside in mRNA + GTP + H(+) = a 5'-end (5'-triphosphoguanosine)-ribonucleoside in mRNA + diphosphate. Its pathway is mRNA processing; mRNA capping. Functionally, enzyme involved in mRNA capping (Potential). Binds to GTP and might have guanylyltransferase activity. Together with the RNA-directed RNA polymerase P1 and protein P7, forms an transcriptional complex positioned near the channels situated at each of the five-fold vertices of the core. This chain is Putative mRNA-capping enzyme P5, found in Catharanthus roseus (Madagascar periwinkle).